A 336-amino-acid polypeptide reads, in one-letter code: Anthranilate phosphoribosyltransferase (336 aa).

5-phospho-alpha-D-ribose 1-diphosphate contacts are provided by residues G81, 84–85 (GD), S89, 91–94 (NIST), 109–117 (KHGNRGLSS), and A121. Residue G81 coordinates anthranilate. Position 93 (S93) interacts with Mg(2+). Anthranilate is bound at residue N112. R167 provides a ligand contact to anthranilate. The Mg(2+) site is built by D225 and E226.

It belongs to the anthranilate phosphoribosyltransferase family. Homodimer. Mg(2+) is required as a cofactor.

It carries out the reaction N-(5-phospho-beta-D-ribosyl)anthranilate + diphosphate = 5-phospho-alpha-D-ribose 1-diphosphate + anthranilate. It participates in amino-acid biosynthesis; L-tryptophan biosynthesis; L-tryptophan from chorismate: step 2/5. Functionally, catalyzes the transfer of the phosphoribosyl group of 5-phosphorylribose-1-pyrophosphate (PRPP) to anthranilate to yield N-(5'-phosphoribosyl)-anthranilate (PRA). In Mesorhizobium japonicum (strain LMG 29417 / CECT 9101 / MAFF 303099) (Mesorhizobium loti (strain MAFF 303099)), this protein is Anthranilate phosphoribosyltransferase.